Here is a 510-residue protein sequence, read N- to C-terminus: Probable cytosol aminopeptidase (510 aa).

Mn(2+)-binding residues include lysine 254 and aspartate 259. The active site involves lysine 266. Residues aspartate 277, aspartate 336, and glutamate 338 each contribute to the Mn(2+) site. The active site involves arginine 340. Residues 487 to 510 (AQPVKASPKTRPARKSTPAAKTRA) form a disordered region.

It belongs to the peptidase M17 family. Mn(2+) is required as a cofactor.

Its subcellular location is the cytoplasm. The catalysed reaction is Release of an N-terminal amino acid, Xaa-|-Yaa-, in which Xaa is preferably Leu, but may be other amino acids including Pro although not Arg or Lys, and Yaa may be Pro. Amino acid amides and methyl esters are also readily hydrolyzed, but rates on arylamides are exceedingly low.. It catalyses the reaction Release of an N-terminal amino acid, preferentially leucine, but not glutamic or aspartic acids.. Its function is as follows. Presumably involved in the processing and regular turnover of intracellular proteins. Catalyzes the removal of unsubstituted N-terminal amino acids from various peptides. The protein is Probable cytosol aminopeptidase of Polaromonas naphthalenivorans (strain CJ2).